Here is a 67-residue protein sequence, read N- to C-terminus: UPF0337 protein Atu4724 (67 aa).

This sequence belongs to the UPF0337 (CsbD) family.

This is UPF0337 protein Atu4724 from Agrobacterium fabrum (strain C58 / ATCC 33970) (Agrobacterium tumefaciens (strain C58)).